The following is a 217-amino-acid chain: Pyrrolidone-carboxylate peptidase (217 aa).

Active-site residues include glutamate 78, cysteine 141, and histidine 168.

It belongs to the peptidase C15 family. Homotetramer.

It is found in the cytoplasm. It carries out the reaction Release of an N-terminal pyroglutamyl group from a polypeptide, the second amino acid generally not being Pro.. In terms of biological role, removes 5-oxoproline from various penultimate amino acid residues except L-proline. The protein is Pyrrolidone-carboxylate peptidase of Treponema denticola (strain ATCC 35405 / DSM 14222 / CIP 103919 / JCM 8153 / KCTC 15104).